A 443-amino-acid polypeptide reads, in one-letter code: ATP-dependent protease ATPase subunit HslU (443 aa).

ATP contacts are provided by residues Ile-20, 62–67 (GVGKTE), Asp-255, Glu-321, and Arg-393.

It belongs to the ClpX chaperone family. HslU subfamily. In terms of assembly, a double ring-shaped homohexamer of HslV is capped on each side by a ring-shaped HslU homohexamer. The assembly of the HslU/HslV complex is dependent on binding of ATP.

The protein localises to the cytoplasm. ATPase subunit of a proteasome-like degradation complex; this subunit has chaperone activity. The binding of ATP and its subsequent hydrolysis by HslU are essential for unfolding of protein substrates subsequently hydrolyzed by HslV. HslU recognizes the N-terminal part of its protein substrates and unfolds these before they are guided to HslV for hydrolysis. In Helicobacter pylori (strain ATCC 700392 / 26695) (Campylobacter pylori), this protein is ATP-dependent protease ATPase subunit HslU.